Reading from the N-terminus, the 294-residue chain is Probable 2-(5''-triphosphoribosyl)-3'-dephosphocoenzyme-A synthase (294 aa).

This sequence belongs to the CitG/MdcB family.

The catalysed reaction is 3'-dephospho-CoA + ATP = 2'-(5''-triphospho-alpha-D-ribosyl)-3'-dephospho-CoA + adenine. The chain is Probable 2-(5''-triphosphoribosyl)-3'-dephosphocoenzyme-A synthase from Streptococcus pyogenes serotype M28 (strain MGAS6180).